A 94-amino-acid chain; its full sequence is Large ribosomal subunit protein bL25 (94 aa).

The protein belongs to the bacterial ribosomal protein bL25 family. As to quaternary structure, part of the 50S ribosomal subunit; part of the 5S rRNA/L5/L18/L25 subcomplex. Contacts the 5S rRNA. Binds to the 5S rRNA independently of L5 and L18.

Its function is as follows. This is one of the proteins that binds to the 5S RNA in the ribosome where it forms part of the central protuberance. This Erwinia tasmaniensis (strain DSM 17950 / CFBP 7177 / CIP 109463 / NCPPB 4357 / Et1/99) protein is Large ribosomal subunit protein bL25.